The sequence spans 486 residues: Hexokinase-2 (486 aa).

At S15 the chain carries Phosphoserine. The region spanning 21 to 469 (KELMQQIENF…SGAGAAVIAA (449 aa)) is the Hexokinase domain. Phosphothreonine is present on T38. The segment at 75 to 209 (TGKESGDFLA…NIPIEVVALI (135 aa)) is hexokinase small subdomain. Residues 86 to 91 (DLGGTN) and K111 contribute to the ATP site. S158 is modified (phosphoserine). Substrate is bound by residues S158, 175–176 (TK), 210–211 (ND), and N237. Residues 210-458 (NDTTGTLVAS…YPIKIVPAED (249 aa)) are hexokinase large subdomain. Position 245 is a phosphoserine (S245). E269 lines the substrate pocket. S272 carries the post-translational modification Phosphoserine. E302 contacts substrate. ATP is bound by residues 307-308 (GY), 344-348 (TSYPA), and 419-423 (SVYNR).

Belongs to the hexokinase family. As to quaternary structure, homodimer.

It carries out the reaction a D-hexose + ATP = a D-hexose 6-phosphate + ADP + H(+). The catalysed reaction is D-fructose + ATP = D-fructose 6-phosphate + ADP + H(+). It catalyses the reaction D-glucose + ATP = D-glucose 6-phosphate + ADP + H(+). Its pathway is carbohydrate metabolism; hexose metabolism. It participates in carbohydrate degradation; glycolysis; D-glyceraldehyde 3-phosphate and glycerone phosphate from D-glucose: step 1/4. Its activity is regulated as follows. Subject to allosteric control. Substrate inhibition by ATP. Functionally, catalyzes the phosphorylation of hexose, such as D-glucose and D-fructose, to hexose 6-phosphate (D-glucose 6-phosphate and D-fructose 6-phosphate, respectively). Mediates the initial step of glycolysis by catalyzing phosphorylation of D-glucose to D-glucose 6-phosphate. This Saccharomyces cerevisiae (strain ATCC 204508 / S288c) (Baker's yeast) protein is Hexokinase-2 (HXK2).